The chain runs to 67 residues: Alpha-toxin Tf3 (67 aa).

Positions 2–63 constitute an LCN-type CS-alpha/beta domain; it reads KDGYPVEGDN…EPTKTNGRCK (62 aa). 4 cysteine pairs are disulfide-bonded: C12–C62, C16–C38, C24–C45, and C28–C47. P64 carries the post-translational modification Proline amide.

The protein belongs to the long (4 C-C) scorpion toxin superfamily. Sodium channel inhibitor family. Alpha subfamily. As to expression, expressed by the venom gland.

It localises to the secreted. Its function is as follows. Alpha toxins bind voltage-independently at site-3 of sodium channels (Nav) and inhibit the inactivation of the activated channels, thereby blocking neuronal transmission. The polypeptide is Alpha-toxin Tf3 (Tityus fasciolatus (Central Brazilian scorpion)).